We begin with the raw amino-acid sequence, 739 residues long: Vascular cell adhesion protein 1 (739 aa).

The N-terminal stretch at 1–24 (MPRKMVVIFGASNILWMVFAVSQA) is a signal peptide. 7 consecutive Ig-like C2-type domains span residues 25–105 (SKME…KKLE), 109–212 (QVEI…KERE), 223–309 (PRNT…LIVQ), 312–399 (PFTV…IKVD), 408–506 (EVEM…QTLY), 511–595 (PRDT…VELI), and 600–684 (PKDI…LTLD). At 25-698 (SKMEIFLEPR…ENNKDYFSPE (674 aa)) the chain is on the extracellular side. Disulfide bonds link cysteine 47/cysteine 95, cysteine 52/cysteine 99, cysteine 137/cysteine 195, cysteine 246/cysteine 291, and cysteine 335/cysteine 383. Residues asparagine 76 and asparagine 77 are each glycosylated (N-linked (GlcNAc...) asparagine). An N-linked (GlcNAc...) asparagine glycan is attached at asparagine 273. A glycan (N-linked (GlcNAc...) asparagine) is linked at asparagine 531. Cysteine 534 and cysteine 579 are disulfide-bonded. A helical transmembrane segment spans residues 699–720 (LLVLYCASSLIIPAIGMIIYFA). Residues 721–739 (RRANMKGSYSLVEAQKSKV) are Cytoplasmic-facing.

Cleaved by the metalloproteinase ADAM17 to generate the soluble form. In terms of processing, sialoglycoprotein. Post-translationally, ubiquitinated by TRIM65 via 'Lys-48'-linked ubiquitination; leading to proteasomal degradation.

The protein resides in the cell membrane. Its subcellular location is the secreted. Functionally, cell adhesion glycoprotein predominantly expressed on the surface of endothelial cells that plays an important role in immune surveillance and inflammation. Acts as a major regulator of leukocyte adhesion to the endothelium through interaction with different types of integrins. During inflammatory responses, binds ligands on the surface of activated endothelial cells to initiate the activation of calcium channels and the plasma membrane-associated small GTPase RAC1 leading to leukocyte transendothelial migration. Also serves as a quality-control checkpoint for entry into bone marrow by providing a 'don't-eat-me' stamping in the context of major histocompatibility complex (MHC) class-I presentation. The sequence is that of Vascular cell adhesion protein 1 (VCAM1) from Canis lupus familiaris (Dog).